The chain runs to 258 residues: uncharacterized protein (258 aa).

The signal sequence occupies residues 1-19; the sequence is MVGILPLCCSGCVPSLCCS. The next 3 membrane-spanning stretches (helical) occupy residues 94 to 114, 197 to 217, and 219 to 239; these read GLLLPCLLGVGSWLLFNNWTG, CLILGIFLFCFVLAVIGLPYI, and PGLSLSVALLWQSLILLSSLV.

The protein resides in the membrane. This is an uncharacterized protein from Homo sapiens (Human).